The sequence spans 1026 residues: Multidrug resistance protein MdtC (1026 aa).

11 helical membrane passes run 15–35, 333–353, 360–380, 387–407, 431–451, 463–483, 528–548, 853–873, 897–917, 953–973, and 984–1004; these read ILIA…LPVA, EVEE…FLFL, LIPA…MYLC, LSLM…IVVL, VGFT…PLLL, FAVT…TLTP, LVGV…IAIP, LILI…LYES, LFNA…IGIV, PIMM…LSGG, and ITIV…TPVV.

The protein belongs to the resistance-nodulation-cell division (RND) (TC 2.A.6) family. MdtC subfamily. Part of a tripartite efflux system composed of MdtA, MdtB and MdtC. MdtC forms a heteromultimer with MdtB.

It localises to the cell inner membrane. In Salmonella dublin (strain CT_02021853), this protein is Multidrug resistance protein MdtC.